Consider the following 88-residue polypeptide: Large ribosomal subunit protein bL27 (88 aa).

The span at 1–13 shows a compositional bias: polar residues; that stretch reads MATKKGASSSSNG. Positions 1–23 are disordered; it reads MATKKGASSSSNGRDSEAKRLGV.

It belongs to the bacterial ribosomal protein bL27 family.

This chain is Large ribosomal subunit protein bL27, found in Corynebacterium urealyticum (strain ATCC 43042 / DSM 7109).